Here is a 328-residue protein sequence, read N- to C-terminus: Phosphate acetyltransferase (328 aa).

The protein belongs to the phosphate acetyltransferase and butyryltransferase family.

It localises to the cytoplasm. It carries out the reaction acetyl-CoA + phosphate = acetyl phosphate + CoA. It participates in metabolic intermediate biosynthesis; acetyl-CoA biosynthesis; acetyl-CoA from acetate: step 2/2. This is Phosphate acetyltransferase (pta) from Thermoanaerobacterium thermosaccharolyticum (strain ATCC 7956 / DSM 571 / NCIMB 9385 / NCA 3814 / NCTC 13789 / WDCM 00135 / 2032) (Clostridium thermosaccharolyticum).